The primary structure comprises 245 residues: MARRWSGETRLGLVRRARRMNRALAQAFPHVYCELDFTSPLELTVATILSAQSTDKRVNLTTPAVFARYRSALDYMQADRAELENFIRPTGFFRNKAASLIRLGQALVERFDGEVPSTMVDLFTLPGVGRKTANVILGNAFGIPGITVDTHFGRLVRRWRWTAEEDPVKVEHAVGELIERDQWTLLSHRVIFHGRRVCHARKPACGVCVLAKDCPSFGLGPTEPLLAAPLVQGPEAGHLLALAGL.

The HhH domain occupies 119–138 (MVDLFTLPGVGRKTANVILG). [4Fe-4S] cluster is bound by residues cysteine 198, cysteine 205, cysteine 208, and cysteine 214.

The protein belongs to the Nth/MutY family. Requires [4Fe-4S] cluster as cofactor.

The catalysed reaction is 2'-deoxyribonucleotide-(2'-deoxyribose 5'-phosphate)-2'-deoxyribonucleotide-DNA = a 3'-end 2'-deoxyribonucleotide-(2,3-dehydro-2,3-deoxyribose 5'-phosphate)-DNA + a 5'-end 5'-phospho-2'-deoxyribonucleoside-DNA + H(+). Its function is as follows. DNA repair enzyme that has both DNA N-glycosylase activity and AP-lyase activity. The DNA N-glycosylase activity releases various damaged pyrimidines from DNA by cleaving the N-glycosidic bond, leaving an AP (apurinic/apyrimidinic) site. The AP-lyase activity cleaves the phosphodiester bond 3' to the AP site by a beta-elimination, leaving a 3'-terminal unsaturated sugar and a product with a terminal 5'-phosphate. This is Endonuclease III from Mycobacterium leprae (strain TN).